The following is a 141-amino-acid chain: HTH-type transcriptional repressor NsrR (141 aa).

Residues 2–129 form the HTH rrf2-type domain; the sequence is QLTSFTDYGL…DNYTLADLVE (128 aa). The segment at residues 28 to 51 is a DNA-binding region (H-T-H motif); that stretch reads ISEVTDVYGVSRNHMVKIINQLSR. [2Fe-2S] cluster-binding residues include Cys-91, Cys-96, and Cys-102.

It depends on [2Fe-2S] cluster as a cofactor.

In terms of biological role, nitric oxide-sensitive repressor of genes involved in protecting the cell against nitrosative stress. May require iron for activity. The sequence is that of HTH-type transcriptional repressor NsrR from Escherichia coli O127:H6 (strain E2348/69 / EPEC).